The sequence spans 418 residues: Putative ion-transport protein YfeO (418 aa).

A run of 12 helical transmembrane segments spans residues 10-30, 54-74, 99-119, 120-140, 149-169, 186-206, 223-243, 258-278, 300-320, 322-342, 343-363, and 371-391; these read LLLS…LIVV, DSPF…GLVI, ALLG…SLGP, EHPI…RLLP, ILAS…AALI, LFAP…FFHP, ILSG…AVWC, VLVL…GGPV, DYFL…ASGF, GGRI…LHEH, VPAV…VLVV, and LFMA…CIVM.

It belongs to the chloride channel (TC 2.A.49) family.

The protein resides in the cell membrane. The polypeptide is Putative ion-transport protein YfeO (Escherichia coli O17:K52:H18 (strain UMN026 / ExPEC)).